The chain runs to 241 residues: ATP synthase subunit a (241 aa).

The next 8 membrane-spanning stretches (helical) occupy residues 29-49 (NSSF…LFGI), 54-74 (VIPG…ISII), 86-106 (IPLI…GVLP), 114-134 (HVIV…IVGF), 153-173 (WLAP…PVSL), 177-197 (LAAN…FIVN), 200-220 (IFFT…EVFV), and 221-241 (AILQ…DAVK).

The protein belongs to the ATPase A chain family. As to quaternary structure, F-type ATPases have 2 components, CF(1) - the catalytic core - and CF(0) - the membrane proton channel. CF(1) has five subunits: alpha(3), beta(3), gamma(1), delta(1), epsilon(1). CF(0) has three main subunits: a(1), b(2) and c(9-12). The alpha and beta chains form an alternating ring which encloses part of the gamma chain. CF(1) is attached to CF(0) by a central stalk formed by the gamma and epsilon chains, while a peripheral stalk is formed by the delta and b chains.

Its subcellular location is the cell membrane. Key component of the proton channel; it plays a direct role in the translocation of protons across the membrane. The sequence is that of ATP synthase subunit a from Wolbachia pipientis wMel.